The primary structure comprises 3926 residues: Hybrid PKS-NRPS synthetase LUC5 (3926 aa).

The Ketosynthase family 3 (KS3) domain occupies 8 to 439; that stretch reads REPIAIVGTA…GTNAHAIIES (432 aa). Active-site for beta-ketoacyl synthase activity residues include cysteine 181, histidine 318, and histidine 359. Residues 545–863 form a malonyl-CoA:ACP transacylase (MAT) domain region; it reads VFTGQGAQWP…QGALTRNVHD (319 aa). An N-terminal hotdog fold region spans residues 932-1065; that stretch reads HPLLGTRSTE…GHLRVDFGSE (134 aa). The segment at 932–1225 is dehydratase (DH) domain; that stretch reads HPLLGTRSTE…GLTCTSLLRP (294 aa). The PKS/mFAS DH domain maps to 932–1228; sequence HPLLGTRSTE…CTSLLRPGPS (297 aa). The Proton acceptor; for dehydratase activity role is filled by histidine 964. The tract at residues 1081–1228 is C-terminal hotdog fold; sequence LTSVNIERFY…CTSLLRPGPS (148 aa). Aspartate 1138 functions as the Proton donor; for dehydratase activity in the catalytic mechanism. A C-methyltransferase (CMeT) domain region spans residues 1344 to 1572; sequence IRAVGENLTE…VNDFYDPSKY (229 aa). Positions 2091-2265 are ketoreductase (KR) domain 1; the sequence is TYLLAGCTGG…AASVIHIGMI (175 aa). A Carrier 1 domain is found at 2371 to 2448; sequence EMLEVVEEEF…EICSTAVASL (78 aa). Serine 2408 bears the O-(pantetheine 4'-phosphoryl)serine mark. Residues 2474 to 2506 show a composition bias toward polar residues; the sequence is VSGNGSSSSRAPTEFNSSTLKSGAQSTQGTSVS. The disordered stretch occupies residues 2474 to 2518; sequence VSGNGSSSSRAPTEFNSSTLKSGAQSTQGTSVSGDKDTNSVDGSA. Residues 2507–2518 show a composition bias toward basic and acidic residues; it reads GDKDTNSVDGSA. Residues 2525–2810 are condensation; the sequence is PLSFAQERIW…VNLLPLRFQL (286 aa). The adenylation stretch occupies residues 2979 to 3389; that stretch reads DWVKRQPDAI…RIAGDSQIKL (411 aa). Residues 3501–3580 form the Carrier 2 domain; the sequence is ETLTTTQERL…GMAAKIDGST (80 aa). An O-(pantetheine 4'-phosphoryl)serine modification is found at serine 3540. A thiolester reductase (TE) domain region spans residues 3619–3840; the sequence is LTGATGFLGL…DFVPVEQVAD (222 aa).

It in the C-terminal section; belongs to the NRP synthetase family.

The protein operates within mycotoxin biosynthesis. Hybrid PKS-NRPS synthetase; part of the gene cluster that mediates the biosynthesis of the mycotoxin lucilactaene and the lucilactaene-related compound NG-391 that act as cell cycle inhibitors with potent growth inhibitory activity against malarial parasites, moderate growth inhibitory activity against cancer cells, and no activity against bacteria and fungi. The hybrid PKS-NRPS synthetase LUC5 is responsible for the condensation of one acetyl-coenzyme A (CoA) unit with six malonyl-CoA units and the amide linkage of the arising heptaketide and homoserine, subsequently releasing the first intermediate prelucilactaene B, as an alcohol with an open ring structure. Lucilactaene and NG-391 lack the 7-methyl group present in fusarins which is inserted in fusarins by the C-methyltransferase (CMeT) domain of the fusarin synthetase FUS1, suggesting that the CMet domain of LUC5 does not methylate this position. Within the pathway, both the cytochrome P450 monooxygenase LUC2 and the hydrolase LUC6 function in parallel in modification of prelucilactaene B. LUC6 may catalyze the 2-pyrrolidone ring formation to form prelucilactaene C from prelucilactaene B, followed by C-15 hydroxylation by the same enzyme to give prelucilactaene D, which is then converted to prelucilactaene E by epoxidation, and finally to prelucilactaene F by cyclization. Prelucilactane D, prelucilactaene E, and prelucilactaene F can be converted to dihydrolucilactaene, NG391, and lucilactaene, respectively, via C-20 methyl group hydroxylation by the cytochrome P450 monooxygenase LUC2. However, LUC2, unlike FUS8 in fusarin C biosynthesis, is not enough for the full oxidation of the C-20 methyl group into carboxylic acid, which is a prerequisite for the final methylation step. The aldehyde dehydrogenase LUC3 is involved in the biosynthesis by further oxidation of the C-20 alcoholic analog prelucilactaene G into a carboxylic derivative. This unidentified carboxylic derivative may be converted to demethyllucilactaene. As the last step, the methyltransferase LUC1 methylates the hydroxyl group at C-21 of demethyllucilactaene to generate lucilactaene. This Fusarium sp protein is Hybrid PKS-NRPS synthetase LUC5.